The chain runs to 66 residues: Beta-mammal toxin Co3 (66 aa).

The 66-residue stretch at 1 to 66 (KEGYIVNYYD…VWPLPNKTCN (66 aa)) folds into the LCN-type CS-alpha/beta domain. Disulfide bonds link C12–C65, C16–C41, C25–C46, and C29–C48.

As to expression, expressed by the venom gland.

The protein localises to the secreted. In terms of biological role, beta toxins bind voltage-independently at site-4 of sodium channels (Nav) and shift the voltage of activation toward more negative potentials thereby affecting sodium channel activation and promoting spontaneous and repetitive firing. This toxin acts on human Nav1.2/SCN2A, Nav1.4/SCN4A and Nav1.6/SCN8A voltage-gated sodium channels. Also, it reduces the peak of sodium currents in Nav1.5/SCN5A at all potentials. In vivo, is lethal to mice when intraperitoneally injected at a dose of 5ug. No activity is observed when injected into crickets or woodlice. The sequence is that of Beta-mammal toxin Co3 from Centruroides ornatus (Scorpion).